Here is a 694-residue protein sequence, read N- to C-terminus: Heat shock protein homolog SSE1 (694 aa).

Residues 671 to 694 (AQRSADSEAKKDATPEGDAQMDLD) are disordered. Over residues 675–684 (ADSEAKKDAT) the composition is skewed to basic and acidic residues.

It belongs to the heat shock protein 70 family.

It localises to the cytoplasm. This Candida glabrata (strain ATCC 2001 / BCRC 20586 / JCM 3761 / NBRC 0622 / NRRL Y-65 / CBS 138) (Yeast) protein is Heat shock protein homolog SSE1 (SSE1).